Here is a 332-residue protein sequence, read N- to C-terminus: rRNA biogenesis protein rrp-36 (332 aa).

4 disordered regions span residues 1 to 91, 104 to 196, 243 to 262, and 312 to 332; these read MPAV…ASQL, GALK…SGKS, SMESKKKARARKDKERELLS, and KKIAGKEKKALPLARRTAEDR. 3 stretches are compositionally biased toward acidic residues: residues 27–45, 53–77, and 117–127; these read EPDSDVEGSSDEAPSEEEG, DTEEEEEDEEIEEGSEPGSDDDSDA, and EDGSDDDEEKE. Basic and acidic residues-rich tracts occupy residues 128–142 and 165–183; these read EPNWKTEIEKGMKAK and RRRDFLANEPAKPKSRDPR. A coiled-coil region spans residues 212–274; it reads DYQEDEMKQL…KKKEKELIKQ (63 aa). The segment covering 315–332 has biased composition (basic and acidic residues); the sequence is AGKEKKALPLARRTAEDR.

This sequence belongs to the RRP36 family. As to quaternary structure, associates with 90S and pre-40S pre-ribosomal particles.

The protein localises to the nucleus. The protein resides in the nucleolus. Functionally, component of the 90S pre-ribosome involved in the maturation of rRNAs. Required for early cleavages of the pre-RNAs in the 40S ribosomal subunit maturation pathway. The polypeptide is rRNA biogenesis protein rrp-36 (rrp-36) (Neurospora crassa (strain ATCC 24698 / 74-OR23-1A / CBS 708.71 / DSM 1257 / FGSC 987)).